Reading from the N-terminus, the 673-residue chain is Polygalacturonate 4-alpha-galacturonosyltransferase (673 aa).

Residues 1–22 are Cytoplasmic-facing; that stretch reads MALKRGLSGVNRIRGSGGGSRS. The chain crosses the membrane as a helical; Signal-anchor for type II membrane protein span at residues 23 to 43; it reads VLVLLIFFCVFAPLCFFVGRG. The Lumenal portion of the chain corresponds to 44–673; the sequence is VYIDSSNDYS…PYLRRCNLHE (630 aa). N-linked (GlcNAc...) asparagine glycosylation is present at Asn-103. Residues 112-136 form a disordered region; it reads GVDPSFRHSENPATPDVKSNNLNEK. Residues Asn-382, Asn-434, Asn-538, and Asn-585 are each glycosylated (N-linked (GlcNAc...) asparagine).

This sequence belongs to the glycosyltransferase 8 family. As to expression, expressed in seedlings, inflorescences, flowers, siliques, pollen, roots, stems and leaves.

It localises to the golgi apparatus membrane. The catalysed reaction is [(1-&gt;4)-alpha-D-galacturonosyl](n) + UDP-alpha-D-galacturonate = [(1-&gt;4)-alpha-D-galacturonosyl](n+1) + UDP + H(+). The protein operates within glycan metabolism; pectin biosynthesis. Functionally, involved in pectin biosynthesis. Catalyzes the transfer of galacturonic acid from uridine 5'-diphosphogalacturonic acid onto the pectic polysaccharide homogalacturonan. In Arabidopsis thaliana (Mouse-ear cress), this protein is Polygalacturonate 4-alpha-galacturonosyltransferase (GAUT1).